The following is a 208-amino-acid chain: N-(5'-phosphoribosyl)anthranilate isomerase (208 aa).

This sequence belongs to the TrpF family.

The enzyme catalyses N-(5-phospho-beta-D-ribosyl)anthranilate = 1-(2-carboxyphenylamino)-1-deoxy-D-ribulose 5-phosphate. Its pathway is amino-acid biosynthesis; L-tryptophan biosynthesis; L-tryptophan from chorismate: step 3/5. The chain is N-(5'-phosphoribosyl)anthranilate isomerase from Deinococcus radiodurans (strain ATCC 13939 / DSM 20539 / JCM 16871 / CCUG 27074 / LMG 4051 / NBRC 15346 / NCIMB 9279 / VKM B-1422 / R1).